The chain runs to 282 residues: Plant cysteine oxidase 3 (282 aa).

Fe cation is bound by residues His131, His133, and His202.

This sequence belongs to the cysteine dioxygenase family. Fe(2+) serves as cofactor.

The protein localises to the nucleus. It is found in the cytoplasm. The enzyme catalyses L-cysteine + O2 = 3-sulfino-L-alanine + H(+). Functionally, catalyzes the oxidation of N-terminal cysteine residues (N-Cys), thus preparing the protein for N-end rule pathway-mediated proteasomal degradation, upstream of the N-end rule enzymes ATE1, ATE2 and PRT6. Controls the preparation of the group VII ethylene response factor (ERF-VII) proteins for degradation via the 26S proteasome N-end rule pathway. Acts as an oxygen sensor that controls the stability of ERF-VII proteins, which are stabilized in flooding-induced hypoxia, and regulate transcriptional adaptation to these adverse conditions. This Arabidopsis thaliana (Mouse-ear cress) protein is Plant cysteine oxidase 3.